We begin with the raw amino-acid sequence, 266 residues long: uncharacterized protein (266 aa).

Transmembrane regions (helical) follow at residues 9 to 29 (IFII…IELP), 79 to 99 (GIMT…INPF), 122 to 142 (LSVM…MLSG), and 193 to 213 (GWYL…MVFI).

The protein resides in the membrane. This is an uncharacterized protein from Dictyostelium discoideum (Social amoeba).